The sequence spans 122 residues: Small ribosomal subunit protein bS6 (122 aa).

A disordered region spans residues 99-122 (PSPMMKEVAREEAKKAAAQTEQAA).

It belongs to the bacterial ribosomal protein bS6 family.

Its function is as follows. Binds together with bS18 to 16S ribosomal RNA. The sequence is that of Small ribosomal subunit protein bS6 from Ralstonia pickettii (strain 12J).